The sequence spans 269 residues: MMKMVCSSSSSSLLVVAALLAVFVGSAQGIAKVPPGPNITAEYGDKWLDAKSTWYGKPTGAGPKDNGGACGYKDVDKAPFNGMTGCGNTPIFKDGRGCGSCFELKCSKPESCSGEPITVHITDDNEEPIAPYHFDLSGHAFGSMAKKGEEENVRGAGELELQFRRVKCKYPDGTKPTFHVEKGSNPNYLALLVKYVDGDGDVVAVDIKEKGKDKWIELKESWGAIWRIDTPDKLTGPFTVRYTTEGGTKAEFEDVIPEGWKADTHDASK.

Positions 1 to 29 are cleaved as a signal peptide; that stretch reads MMKMVCSSSSSSLLVVAALLAVFVGSAQG. Residue N38 is glycosylated (N-linked (GlcNAc...) asparagine). The region spanning 67–173 is the Expansin-like EG45 domain; sequence GGACGYKDVD…RRVKCKYPDG (107 aa). An Expansin-like CBD domain is found at 187 to 268; sequence NYLALLVKYV…GWKADTHDAS (82 aa).

It belongs to the expansin family. Expansin B subfamily.

It localises to the secreted. In Phalaris aquatica (Canary grass), this protein is Major pollen allergen Pha a 1.